A 363-amino-acid polypeptide reads, in one-letter code: Ribosome-binding ATPase YchF (363 aa).

Residues 3-256 (FKCGIVGLPN…LEDEEKVDFL (254 aa)) form the OBG-type G domain. An ATP-binding site is contributed by 12–17 (NVGKST). 2 residues coordinate Mg(2+): S16 and T36. Positions 278-361 (NLQTYFTAGV…QDGDVMHFRF (84 aa)) constitute a TGS domain.

Belongs to the TRAFAC class OBG-HflX-like GTPase superfamily. OBG GTPase family. YchF/OLA1 subfamily. Requires Mg(2+) as cofactor.

ATPase that binds to both the 70S ribosome and the 50S ribosomal subunit in a nucleotide-independent manner. The chain is Ribosome-binding ATPase YchF from Haemophilus ducreyi (strain 35000HP / ATCC 700724).